Consider the following 668-residue polypeptide: MAP kinase kinase PBS2 (668 aa).

Residues 1 to 15 are compositionally biased toward basic and acidic residues; sequence MEDKFANLSLHEKTG. Disordered stretches follow at residues 1–43, 61–120, and 181–313; these read MEDK…SSHY, RALK…ASSK, and NPNR…GSSG. Polar residues-rich tracts occupy residues 16–43, 68–91, and 104–120; these read KSSIQLNEQTGSDNGSAVKRTSSTSSHY, SVGSNQSEQDKGSSQSPKHIQQIV, and SKVSQRMSSQVVQASSK. Phosphoserine is present on Ser68. Residues 239–250 are compositionally biased toward low complexity; the sequence is AQQPQQFAPSPS. At Ser269 the chain carries Phosphoserine. The segment covering 270-300 has biased composition (polar residues); it reads NPGSLINGVQSTSTSSSTEGPHDTVGTTPRT. Over residues 301–310 the composition is skewed to low complexity; that stretch reads GNSNNSSNSG. Positions 360 to 623 constitute a Protein kinase domain; sequence LEFLDELGHG…YAALTEHPWL (264 aa). ATP contacts are provided by residues 366-374 and Lys389; that span reads LGHGNYGNV. Residue Asp485 is the Proton acceptor of the active site. Ser514 is subject to Phosphoserine. Phosphothreonine is present on Thr518.

The protein belongs to the protein kinase superfamily. STE Ser/Thr protein kinase family. MAP kinase kinase subfamily. In terms of assembly, interacts with NBP2, PTC1, SHO1 and STE11. In terms of processing, activated by phosphorylation by SSK2 or SSK22. Ser/Thr phosphorylation is also necessary for SHO1-mediated activation.

Its subcellular location is the cytoplasm. The enzyme catalyses L-seryl-[protein] + ATP = O-phospho-L-seryl-[protein] + ADP + H(+). The catalysed reaction is L-threonyl-[protein] + ATP = O-phospho-L-threonyl-[protein] + ADP + H(+). It carries out the reaction L-tyrosyl-[protein] + ATP = O-phospho-L-tyrosyl-[protein] + ADP + H(+). Kinase involved in a signal transduction pathway that is activated by changes in the osmolarity of the extracellular environment. Activates the MAP kinase HOG1 by concomitant phosphorylation at 'Thr-174' and 'Tyr-176'. This Saccharomyces cerevisiae (strain ATCC 204508 / S288c) (Baker's yeast) protein is MAP kinase kinase PBS2 (PBS2).